We begin with the raw amino-acid sequence, 300 residues long: Acetaldehyde dehydrogenase 3 (300 aa).

Ser-11–Ile-14 contributes to the NAD(+) binding site. The active-site Acyl-thioester intermediate is the Cys-126. NAD(+)-binding positions include Ser-157 to Asn-165 and Asn-276.

The protein belongs to the acetaldehyde dehydrogenase family.

It carries out the reaction acetaldehyde + NAD(+) + CoA = acetyl-CoA + NADH + H(+). This is Acetaldehyde dehydrogenase 3 from Rhodococcus opacus (strain B4).